Reading from the N-terminus, the 660-residue chain is DNA mismatch repair protein MutL (660 aa).

The protein belongs to the DNA mismatch repair MutL/HexB family.

Its function is as follows. This protein is involved in the repair of mismatches in DNA. It is required for dam-dependent methyl-directed DNA mismatch repair. May act as a 'molecular matchmaker', a protein that promotes the formation of a stable complex between two or more DNA-binding proteins in an ATP-dependent manner without itself being part of a final effector complex. This chain is DNA mismatch repair protein MutL, found in Streptococcus pyogenes serotype M12 (strain MGAS2096).